A 197-amino-acid chain; its full sequence is Probable GTP-binding protein EngB (197 aa).

One can recognise an EngB-type G domain in the interval 22-195 (GYPEIALVGR…WNWIEAQAFG (174 aa)). GTP contacts are provided by residues 30 to 37 (GRSNVGKS), 57 to 61 (GKTQT), 75 to 78 (DVPG), 142 to 145 (TKSD), and 174 to 176 (FSA). Positions 37 and 59 each coordinate Mg(2+).

This sequence belongs to the TRAFAC class TrmE-Era-EngA-EngB-Septin-like GTPase superfamily. EngB GTPase family. Mg(2+) is required as a cofactor.

In terms of biological role, necessary for normal cell division and for the maintenance of normal septation. This chain is Probable GTP-binding protein EngB, found in Levilactobacillus brevis (strain ATCC 367 / BCRC 12310 / CIP 105137 / JCM 1170 / LMG 11437 / NCIMB 947 / NCTC 947) (Lactobacillus brevis).